We begin with the raw amino-acid sequence, 88 residues long: DDKELKKQLLRKYSGCLGNLRKELCKKRKKDKLPKEARQKLLSWWELHYRWPYPSEMEKIALAESTGLEQKQINNWFINQRKRHWKPS.

Residues Glu-4–Leu-24 enclose the ELK domain. Positions Cys-25–Ser-88 form a DNA-binding region, homeobox; TALE-type.

This sequence belongs to the TALE/KNOX homeobox family. As to expression, strongly expressed in ear inflorescence primordia and shoot meristem. Weakly expressed in embryos. Absent from leaves.

The protein resides in the nucleus. In terms of biological role, probably binds to the DNA sequence 5'-TGAC-3'. This Zea mays (Maize) protein is Homeobox protein knotted-1-like 3 (KNOX3).